We begin with the raw amino-acid sequence, 171 residues long: Inosine/xanthosine triphosphatase (171 aa).

8-13 (TTNPAK) is a binding site for substrate. Residue E38 participates in Mg(2+) binding.

This sequence belongs to the YjjX NTPase family. Homodimer. Requires Mg(2+) as cofactor. Mn(2+) is required as a cofactor.

It catalyses the reaction XTP + H2O = XDP + phosphate + H(+). It carries out the reaction ITP + H2O = IDP + phosphate + H(+). In terms of biological role, phosphatase that hydrolyzes non-canonical purine nucleotides such as XTP and ITP to their respective diphosphate derivatives. Probably excludes non-canonical purines from DNA/RNA precursor pool, thus preventing their incorporation into DNA/RNA and avoiding chromosomal lesions. The protein is Inosine/xanthosine triphosphatase of Klebsiella pneumoniae (strain 342).